The following is a 392-amino-acid chain: GPI alpha-1,4-mannosyltransferase I, catalytic subunit (392 aa).

Residues 1 to 4 lie on the Cytoplasmic side of the membrane; the sequence is MEAR. A helical transmembrane segment spans residues 5-25; that stretch reads VCVLFGAAALLRLLLLCVGVY. Over 26–65 the chain is Lumenal; sequence QDQTLKLKYTDVDYHVFTDAARFITQGESPYRRSTFRYTP. A helical transmembrane segment spans residues 66-86; sequence LLALLLVPNVYLSLLFGKLLF. Residues 87–125 lie on the Cytoplasmic side of the membrane; the sequence is GFCDLLSGLLMFRLLVLRGASHGSACVSCGLWLLNPLPM. A helical transmembrane segment spans residues 126-148; sequence AVSTRGNAESVLAVLVLSTLLCL. Over 149–156 the chain is Lumenal; the sequence is QLRKHTTA. The chain crosses the membrane as a helical span at residues 157–177; sequence ALLFGLSVHMKIYPVTYALPI. The Cytoplasmic segment spans residues 178-198; the sequence is ALALTAAPARGRGVLLRFFSP. Residues 199-219 traverse the membrane as a helical segment; that stretch reads ALLRFAAVSAAVFLSLGLIFY. Topologically, residues 220–261 are lumenal; sequence CRYGWEFLQEAYLYHLTRRDLRHNFSPFFYLQYVCAERCWSS. A helical membrane pass occupies residues 262 to 282; the sequence is GLLPLLLLPQLLLLLLASAAF. Over 283 to 302 the chain is Cytoplasmic; sequence SSDLPFCCFLHTAVFVSFNR. The chain crosses the membrane as a helical span at residues 303 to 323; the sequence is VCTSQYFLWYLCLLPVVLPRL. Topologically, residues 324-330 are lumenal; the sequence is RLRLGRG. The helical transmembrane segment at 331 to 351 threads the bilayer; that stretch reads LLLLLLWLLLQGLWLAPAYLL. Topologically, residues 352 to 360 are cytoplasmic; the sequence is EFQGWNSFS. The helical transmembrane segment at 361 to 381 threads the bilayer; sequence WIWAASLLFLLTNTFILAQII. At 382–392 the chain is on the lumenal side; that stretch reads QHYRPHDRKAD.

The protein belongs to the PIGM family. As to quaternary structure, part of the glycosylphosphatidylinositol-mannosyltransferase I complex that is composed of PIGM and PIGX.

Its subcellular location is the endoplasmic reticulum membrane. It participates in glycolipid biosynthesis; glycosylphosphatidylinositol-anchor biosynthesis. Catalytic subunit of the glycosylphosphatidylinositol-mannosyltransferase I complex which catalyzes the transfer of the first mannose, via an alpha-1,4 bond from a dolichol-phosphate-mannose (Dol-P-Man) to the glucosaminyl acyl phosphatidylinositol (GlcN-(acyl)PI) intermediate to generate alpha-D-Man-(1-&gt;4)-alpha-D-GlcN-(1-&gt;6)-(1-radyl,2-acyl-sn-glycero-3-phospho)-2-acyl-inositol and participates in the sixth step of the glycosylphosphatidylinositol-anchor biosynthesis. In Danio rerio (Zebrafish), this protein is GPI alpha-1,4-mannosyltransferase I, catalytic subunit.